The primary structure comprises 669 residues: Probable serine/threonine-protein kinase DDB_G0291918 (669 aa).

Positions 13-360 (YNNIKELGRG…LKETLNHPFL (348 aa)) constitute a Protein kinase domain. ATP-binding positions include 19–27 (LGRGVSGVV) and Lys-42. Residue Asp-141 is the Proton acceptor of the active site. Residues 396-405 (QNQQQQQQQQ) are compositionally biased toward low complexity. Disordered regions lie at residues 396-518 (QNQQ…APTF) and 530-550 (FPKL…MNWR). Residues 406–418 (KSFSTSSLPQVNH) show a composition bias toward polar residues. Composition is skewed to low complexity over residues 419-449 (NNDT…NNNN) and 457-494 (QSNN…SSTD).

It belongs to the protein kinase superfamily. Ser/Thr protein kinase family.

It catalyses the reaction L-seryl-[protein] + ATP = O-phospho-L-seryl-[protein] + ADP + H(+). The catalysed reaction is L-threonyl-[protein] + ATP = O-phospho-L-threonyl-[protein] + ADP + H(+). The sequence is that of Probable serine/threonine-protein kinase DDB_G0291918 from Dictyostelium discoideum (Social amoeba).